Here is a 233-residue protein sequence, read N- to C-terminus: Large ribosomal subunit protein uL1 (233 aa).

The protein belongs to the universal ribosomal protein uL1 family. As to quaternary structure, part of the 50S ribosomal subunit.

Functionally, binds directly to 23S rRNA. The L1 stalk is quite mobile in the ribosome, and is involved in E site tRNA release. Protein L1 is also a translational repressor protein, it controls the translation of the L11 operon by binding to its mRNA. This is Large ribosomal subunit protein uL1 from Campylobacter curvus (strain 525.92).